We begin with the raw amino-acid sequence, 371 residues long: SufE-like protein 1, chloroplastic/mitochondrial (371 aa).

The transit peptide at 1–66 directs the protein to the chloroplast and mitochondrion; it reads MAAAMSSSCC…ISTGIVPPPS (66 aa). Catalysis depends on Cys-131, which acts as the Cysteine persulfide intermediate. S-glutathionyl cysteine is present on Cys-131. Residues 218 to 249 are disordered; the sequence is VKGEEDSSSGESSESSFVSIPETKDEANVPEV.

This sequence belongs to the SufE family. Heterotetramer with NFS2. Interacts with NFS2 and NIFS1. Interacts in vitro with GRXS14, GRXS15, GRXS16 and GRXS17, but not with GRXC5. Interacts in vivo only with GRXS14 and GRXS16. Glutathionylated. Glutathionylation strongly reduces the stimulation of NFS2 activity. As to expression, expressed in roots, leaves, stems and flowers.

The protein localises to the plastid. The protein resides in the chloroplast stroma. It localises to the mitochondrion. It participates in cofactor biosynthesis; iron-sulfur cluster biosynthesis. In terms of biological role, participates in cysteine desulfurization mediated by NFS2 in chloroplast and NIFS1 in mitochondrion. Activates the cysteine desulfurase activity of NFS2. Cysteine desulfurization mobilizes sulfur from L-cysteine to yield L-alanine and supplies the inorganic sulfur for iron-sulfur (Fe-S) cluster formation. Glutaredoxins regulate SUFE1 activity by inducing its reduction and deglutathionylation. The sequence is that of SufE-like protein 1, chloroplastic/mitochondrial from Arabidopsis thaliana (Mouse-ear cress).